A 360-amino-acid chain; its full sequence is MVHGEAFSRPLSRNEVVGLIFRLTIFGAVTYFTIKWMVDAIDPTRKQKVEAQKQAEKLMRQIGVKNVKLTEYEMSIAAHLVDPLSMLVTWSDIAGLDDVITDLKDTVILPIRKRYLFENSRLLQPPKGVLLYGPPGCGKTMIAKATAKEAGCRFINLQPSTLTDKWYGESQKLAAAVFSLAVKLQPSIIFIDEIDSFLRSRSSSDHEATAMMKAQFMSLWDGLDTDFNCQVIVMGATNRPQDLDTAIMRRMPTRFHINQPSLKQREAILDLILRNESVDSHVDLMEIARGSDGFSGSDLKEMCRDAALLCVRDSVNNSSEESPCEEIRPIHQQDLLRAIDKMKRSKSATNQNVLMHVSLD.

Topologically, residues 1–15 are mitochondrial intermembrane; sequence MVHGEAFSRPLSRNE. A helical transmembrane segment spans residues 16–34; sequence VVGLIFRLTIFGAVTYFTI. Topologically, residues 35–360 are cytoplasmic; that stretch reads KWMVDAIDPT…QNVLMHVSLD (326 aa). 133 to 140 serves as a coordination point for ATP; sequence GPPGCGKT.

It belongs to the AAA ATPase family. MSP1 subfamily.

The protein localises to the mitochondrion outer membrane. The protein resides in the peroxisome membrane. It is found in the postsynaptic cell membrane. The catalysed reaction is [protein]-with a C-terminal TM segment(out) + ATP + H2O = [protein]-with a C-terminal TM segment(in) + ADP + phosphate + H(+). Functionally, outer mitochondrial translocase required to remove mislocalized tail-anchored transmembrane proteins on mitochondria. Specifically recognizes and binds tail-anchored transmembrane proteins: acts as a dislocase that mediates the ATP-dependent extraction of mistargeted tail-anchored transmembrane proteins from the mitochondrion outer membrane. Also plays a critical role in regulating the surface expression of AMPA receptors (AMPAR), thereby regulating synaptic plasticity and learning and memory. In Xenopus tropicalis (Western clawed frog), this protein is Outer mitochondrial transmembrane helix translocase.